The sequence spans 255 residues: Triosephosphate isomerase (255 aa).

Asn9 to Lys11 contacts substrate. Catalysis depends on His95, which acts as the Electrophile. Residue Glu167 is the Proton acceptor of the active site. Substrate is bound by residues Gly173, Ser212, and Gly233–Gly234.

The protein belongs to the triosephosphate isomerase family. In terms of assembly, homodimer.

It is found in the cytoplasm. It carries out the reaction D-glyceraldehyde 3-phosphate = dihydroxyacetone phosphate. It participates in carbohydrate biosynthesis; gluconeogenesis. It functions in the pathway carbohydrate degradation; glycolysis; D-glyceraldehyde 3-phosphate from glycerone phosphate: step 1/1. Its function is as follows. Involved in the gluconeogenesis. Catalyzes stereospecifically the conversion of dihydroxyacetone phosphate (DHAP) to D-glyceraldehyde-3-phosphate (G3P). This chain is Triosephosphate isomerase, found in Serratia proteamaculans (strain 568).